A 427-amino-acid chain; its full sequence is Probable transcription factor At5g28040 (427 aa).

The tract at residues 1–81 (MASDQRDTDF…APATKSSSGT (81 aa)) is disordered. Phosphoserine is present on Ser14. Residues 22 to 32 (GGGGGGRGGGE) are compositionally biased toward gly residues. The segment covering 33–62 (TESDEDVVIPEPNEAEDDDHDPDPDPEYED) has biased composition (acidic residues).

This sequence belongs to the GeBP family.

In Arabidopsis thaliana (Mouse-ear cress), this protein is Probable transcription factor At5g28040.